The sequence spans 385 residues: MSWRLLTGYQLCRLRLFRKPQPALKIRPSSVCVTYGTDCQSNKENKRTVETLRACSVDIGKICRLKGWVLLEEETYAEEIANILKELGANQTVIASILERCPEAIVCSPAAVNTKRKLWQMVCKTKTELIQLIEQFPESFFAVKDQENQKLNVQFFQELGLKNVVITRFLTTASSIFHNPVENNKQMIGVLLESYLNLGGSEANAKVWLLKLLSQNPFIVLSSPTAVGEVLKFLQGQGFTDSEVLQLLSKLKGFLFQLQPGSIQNSISFTKTTFECTDHDLRQLVVKCPALLYYPAPVLEERIQALLKEGISVAQIRASPMVLELTPQIIQYRIRKLNSLGYGIKDGHLASLNGTKKEFEANFSKMQAKQGRPLFNPVASLKVEE.

The transit peptide at 1 to 35 directs the protein to the mitochondrion; sequence MSWRLLTGYQLCRLRLFRKPQPALKIRPSSVCVTY.

This sequence belongs to the mTERF family. Monomer.

It localises to the mitochondrion matrix. Its subcellular location is the mitochondrion nucleoid. Binds mitochondrial DNA and plays a role in the regulation of transcription of mitochondrial mRNA and rRNA species. This chain is Transcription termination factor 2, mitochondrial (Mterf2), found in Rattus norvegicus (Rat).